We begin with the raw amino-acid sequence, 328 residues long: Biotin synthase (328 aa).

The region spanning 51-282 is the Radical SAM core domain; it reads FNGNHVDLCS…DKIIRYAGGR (232 aa). [4Fe-4S] cluster-binding residues include Cys69, Cys73, and Cys76. 4 residues coordinate [2Fe-2S] cluster: Cys112, Cys147, Cys207, and Arg277.

This sequence belongs to the radical SAM superfamily. Biotin synthase family. In terms of assembly, homodimer. Requires [4Fe-4S] cluster as cofactor. The cofactor is [2Fe-2S] cluster.

It carries out the reaction (4R,5S)-dethiobiotin + (sulfur carrier)-SH + 2 reduced [2Fe-2S]-[ferredoxin] + 2 S-adenosyl-L-methionine = (sulfur carrier)-H + biotin + 2 5'-deoxyadenosine + 2 L-methionine + 2 oxidized [2Fe-2S]-[ferredoxin]. It functions in the pathway cofactor biosynthesis; biotin biosynthesis; biotin from 7,8-diaminononanoate: step 2/2. Catalyzes the conversion of dethiobiotin (DTB) to biotin by the insertion of a sulfur atom into dethiobiotin via a radical-based mechanism. The protein is Biotin synthase of Clostridium acetobutylicum (strain ATCC 824 / DSM 792 / JCM 1419 / IAM 19013 / LMG 5710 / NBRC 13948 / NRRL B-527 / VKM B-1787 / 2291 / W).